The chain runs to 514 residues: Na(+)/H(+) antiporter NhaB (514 aa).

12 helical membrane-spanning segments follow: residues 23–43, 63–83, 97–117, 120–140, 144–164, 202–222, 238–258, 303–323, 357–377, 391–411, 447–467, and 475–495; these read LALL…PFVA, PLLP…TSAA, LLLM…LFIF, LLLS…AAAF, FLDA…FYGI, LMMH…VGEP, FFLR…LTCM, AVIG…VGLI, LTVF…APII, LFYL…VGTI, ATPN…APLI, and VWMA…CVEF.

The protein belongs to the NhaB Na(+)/H(+) (TC 2.A.34) antiporter family.

It localises to the cell inner membrane. It carries out the reaction 2 Na(+)(in) + 3 H(+)(out) = 2 Na(+)(out) + 3 H(+)(in). Na(+)/H(+) antiporter that extrudes sodium in exchange for external protons. The protein is Na(+)/H(+) antiporter NhaB of Salmonella agona (strain SL483).